Consider the following 299-residue polypeptide: Recombination-associated protein RdgC (299 aa).

It belongs to the RdgC family.

The protein localises to the cytoplasm. Its subcellular location is the nucleoid. In terms of biological role, may be involved in recombination. The protein is Recombination-associated protein RdgC of Laribacter hongkongensis (strain HLHK9).